The following is a 251-amino-acid chain: Cobalt transport protein CbiM (251 aa).

The signal sequence occupies residues 1-27 (MNKKKNTILIGLYFLVGIMLFPDRIYA). The next 6 helical transmembrane spans lie at 35–55 (LPVK…ALGI), 66–86 (GPGI…LSSL), 103–123 (LGAI…VLIF), 131–151 (GGLT…PFVA), 166–186 (WLSV…TTAT), and 208–228 (VFAT…VLIF).

Belongs to the CbiM family. Forms an energy-coupling factor (ECF) transporter complex composed of an ATP-binding protein (A component, CbiO), a transmembrane protein (T component, CbiQ) and 2 possible substrate-capture proteins (S components, CbiM and CbiN) of unknown stoichimetry.

The protein localises to the cell membrane. It participates in cofactor biosynthesis; adenosylcobalamin biosynthesis. Part of the energy-coupling factor (ECF) transporter complex CbiMNOQ involved in cobalt import. The polypeptide is Cobalt transport protein CbiM (Acetohalobium arabaticum (strain ATCC 49924 / DSM 5501 / Z-7288)).